The sequence spans 366 residues: Flagellar P-ring protein (366 aa).

An N-terminal signal peptide occupies residues 1–27 (MKSKYSIFCMFLLRGFIFLGTVFSLNS).

Belongs to the FlgI family. The basal body constitutes a major portion of the flagellar organelle and consists of four rings (L,P,S, and M) mounted on a central rod.

It is found in the periplasm. The protein resides in the bacterial flagellum basal body. In terms of biological role, assembles around the rod to form the L-ring and probably protects the motor/basal body from shearing forces during rotation. In Leptospira interrogans serogroup Icterohaemorrhagiae serovar copenhageni (strain Fiocruz L1-130), this protein is Flagellar P-ring protein.